The primary structure comprises 374 residues: Alcohol dehydrogenase class-3 (374 aa).

At Ala-2 the chain carries N-acetylalanine. Positions 45, 67, 97, 100, 103, 111, and 174 each coordinate Zn(2+). Lys-233 is modified (N6-succinyllysine). The residue at position 247 (Ser-247) is a Phosphoserine. At Lys-315 the chain carries N6-succinyllysine. 2 positions are modified to phosphoserine: Ser-324 and Ser-351.

Belongs to the zinc-containing alcohol dehydrogenase family. Class-III subfamily. Homodimer. Requires Zn(2+) as cofactor.

The protein localises to the cytoplasm. The catalysed reaction is a primary alcohol + NAD(+) = an aldehyde + NADH + H(+). It catalyses the reaction a secondary alcohol + NAD(+) = a ketone + NADH + H(+). The enzyme catalyses S-(hydroxymethyl)glutathione + NADP(+) = S-formylglutathione + NADPH + H(+). It carries out the reaction S-(hydroxymethyl)glutathione + NAD(+) = S-formylglutathione + NADH + H(+). The catalysed reaction is 20-oxo-(5Z,8Z,11Z,14Z)-eicosatetraenoate + NAD(+) + H2O = (5Z,8Z,11Z,14Z)-eicosatetraenedioate + NADH + 2 H(+). It catalyses the reaction 20-hydroxy-(5Z,8Z,11Z,14Z)-eicosatetraenoate + NAD(+) = 20-oxo-(5Z,8Z,11Z,14Z)-eicosatetraenoate + NADH + H(+). The enzyme catalyses S-nitrosoglutathione + NADH + H(+) = S-(hydroxysulfenamide)glutathione + NAD(+). In terms of biological role, catalyzes the oxidation of long-chain primary alcohols and the oxidation of S-(hydroxymethyl) glutathione. Also oxidizes long chain omega-hydroxy fatty acids, such as 20-HETE, producing both the intermediate aldehyde, 20-oxoarachidonate and the end product, a dicarboxylic acid, (5Z,8Z,11Z,14Z)-eicosatetraenedioate. Class-III ADH is remarkably ineffective in oxidizing ethanol. Required for clearance of cellular formaldehyde, a cytotoxic and carcinogenic metabolite that induces DNA damage. Also acts as a S-nitroso-glutathione reductase by catalyzing the NADH-dependent reduction of S-nitrosoglutathione, thereby regulating protein S-nitrosylation. The chain is Alcohol dehydrogenase class-3 from Oryctolagus cuniculus (Rabbit).